Reading from the N-terminus, the 174-residue chain is MLTLIQGKKIVNYLRSRLAFEYNGQLIKILSKNIVAVGSLRREEKMLNDVDLLIIVPEKKCLKHVLPNIRIKGLSFSVKVCGERKCVLFIEWEKKTYQLDLFTALAEEKPYAIFHFTGPVSYLIRIRAALKKKNYKLNQYGLFKNQTLVPLKITTEKELIKELGFTYRIPKKRL.

Residues 42 to 51 (REEKMLNDVD) are involved in ssDNA binding. Residues Asp-49 and Asp-51 each contribute to the Mg(2+) site. A disulfide bridge connects residues Cys-81 and Cys-86. A Mg(2+)-binding site is contributed by Asp-100.

It belongs to the DNA polymerase type-X family. Requires Mg(2+) as cofactor.

The protein localises to the virion. The catalysed reaction is DNA(n) + a 2'-deoxyribonucleoside 5'-triphosphate = DNA(n+1) + diphosphate. Its function is as follows. Error-prone polymerase lacking a proofreading 3'-5' exonuclease which catalyzes the gap-filling reaction during the DNA repair process. Specifically binds intermediates in the single-nucleotide base-excision repair process. Also catalyzes DNA polymerization with low nucleotide-insertion fidelity. Probably acts as a strategic DNA mutase, which gives rise to a rapid emergence of variants. Generates mismatched G-G pairs, in that case, the polymerase first binds the deoxynucleotide followed by mismatch formation. Together with the viral DNA ligase, fills the single nucleotide gaps generated by the AP endonuclease. Binds DNA with high affinity via the helix alphaE. This African swine fever virus (isolate Tick/Malawi/Lil 20-1/1983) (ASFV) protein is Repair DNA polymerase X.